A 291-amino-acid chain; its full sequence is uncharacterized protein (291 aa).

Functionally, essential for virus function. This is an uncharacterized protein from Sulfolobus spindle-shape virus 1 (SSV1).